We begin with the raw amino-acid sequence, 110 residues long: Large ribosomal subunit protein P2 (110 aa).

An O-(pantetheine 4'-phosphoryl)serine; in acyl carrier protein form modification is found at Ser59. Residues 62-110 (LASVPSGGAAPAAAAGGAAAGGAAEEKAEDKPAEKDEESDDDMGFGLFD) form a disordered region. The segment covering 63 to 84 (ASVPSGGAAPAAAAGGAAAGGA) has biased composition (low complexity). Positions 85 to 95 (AEEKAEDKPAE) are enriched in basic and acidic residues. Phosphoserine; in ribosomal stalk form is present on Ser100.

It belongs to the eukaryotic ribosomal protein P1/P2 family. The phosphorylated form is part of the ribosomal stalk involved in the interaction of the elongation factors with the ribosome during protein synthesis. The phosphopantetheinylated form is part of the 10S triacylglycerol biosynthetic complex involved in de novo fatty acid biosynthesis. 4'-phosphopantetheine is transferred from CoA to a specific serine by acpS. This modification is essential for activity because fatty acids are bound in thioester linkage to the sulfhydryl of the prosthetic group.

It localises to the cytoplasm. Its function is as follows. Probable bifunctional protein. The phosphorylated protein plays an important role in the elongation step of protein synthesis. The phosphopantetheinylated protein acts as an acyl carrier protein. The polypeptide is Large ribosomal subunit protein P2 (Rhodotorula glutinis (Yeast)).